The sequence spans 40 residues: Meleagrin (40 aa).

Gln1 is subject to Pyrrolidone carboxylic acid. 3 disulfide bridges follow: Cys6–Cys33, Cys12–Cys28, and Cys16–Cys32.

Belongs to the transferrin family.

This is Meleagrin from Meleagris gallopavo (Wild turkey).